The following is a 294-amino-acid chain: MPSLKDLKNRIASVKATQKITKAMKMVAAAKLRRAQEAAEAARPYSQRMGAVLANIAKAVTDADGAPTLMTGTGKDQVHLLVVCTAERGLCGGFNSQIARFARDHVRKLVAEGKTVKIFTVGKKGYDILRREYASLIIERKELRDVKRIGFENADQIGKRIIDMYAAGEFDVCTLFYSEFKSVISQIPTAQQLIPASTGAVQAEDAAHAGAVYEYEPDPASILEDLIPRNISVQIFRALLENVAGEMGAKMSAMDNATRNAGEMINKLTLSYNRQRQAQITKELIEIISGAEAL.

It belongs to the ATPase gamma chain family. F-type ATPases have 2 components, CF(1) - the catalytic core - and CF(0) - the membrane proton channel. CF(1) has five subunits: alpha(3), beta(3), gamma(1), delta(1), epsilon(1). CF(0) has three main subunits: a, b and c.

The protein localises to the cell inner membrane. Produces ATP from ADP in the presence of a proton gradient across the membrane. The gamma chain is believed to be important in regulating ATPase activity and the flow of protons through the CF(0) complex. This is ATP synthase gamma chain from Rhizobium leguminosarum bv. trifolii (strain WSM2304).